Consider the following 425-residue polypeptide: Serine--tRNA ligase (425 aa).

230 to 232 (TAE) is an L-serine binding site. ATP is bound at residue 261 to 263 (RSE). Glu284 contacts L-serine. 348-351 (EISS) is an ATP binding site. Ser384 contacts L-serine.

Belongs to the class-II aminoacyl-tRNA synthetase family. Type-1 seryl-tRNA synthetase subfamily. Homodimer. The tRNA molecule binds across the dimer.

It is found in the cytoplasm. The catalysed reaction is tRNA(Ser) + L-serine + ATP = L-seryl-tRNA(Ser) + AMP + diphosphate + H(+). It carries out the reaction tRNA(Sec) + L-serine + ATP = L-seryl-tRNA(Sec) + AMP + diphosphate + H(+). Its pathway is aminoacyl-tRNA biosynthesis; selenocysteinyl-tRNA(Sec) biosynthesis; L-seryl-tRNA(Sec) from L-serine and tRNA(Sec): step 1/1. Functionally, catalyzes the attachment of serine to tRNA(Ser). Is also able to aminoacylate tRNA(Sec) with serine, to form the misacylated tRNA L-seryl-tRNA(Sec), which will be further converted into selenocysteinyl-tRNA(Sec). The protein is Serine--tRNA ligase of Streptococcus pyogenes serotype M2 (strain MGAS10270).